The following is a 268-amino-acid chain: 14-3-3-like protein GF14 upsilon (268 aa).

A phosphoserine mark is found at S69 and S192. T213 carries the post-translational modification Phosphothreonine. The disordered stretch occupies residues 243-268 (EAGDDIKEAPKEVQKVDEQAQPPPSQ). Residues 246-260 (DDIKEAPKEVQKVDE) show a composition bias toward basic and acidic residues. S267 carries the post-translational modification Phosphoserine.

The protein belongs to the 14-3-3 family. As to quaternary structure, interacts with EDE1. Interacts with DREB1A and DREB1B in the nucleus. Interacts with CINV1.

It is found in the cytoplasm. Its subcellular location is the nucleus. Is associated with a DNA binding complex that binds to the G box, a well-characterized cis-acting DNA regulatory element found in plant genes. May be involved in cell cycle regulation by binding to soluble EDE1 and sequestering it in an inactive form during the early stages of mitosis. This chain is 14-3-3-like protein GF14 upsilon (GRF5), found in Arabidopsis thaliana (Mouse-ear cress).